The sequence spans 248 residues: 3-deoxy-manno-octulosonate cytidylyltransferase (248 aa).

This sequence belongs to the KdsB family.

The protein localises to the cytoplasm. It catalyses the reaction 3-deoxy-alpha-D-manno-oct-2-ulosonate + CTP = CMP-3-deoxy-beta-D-manno-octulosonate + diphosphate. It functions in the pathway nucleotide-sugar biosynthesis; CMP-3-deoxy-D-manno-octulosonate biosynthesis; CMP-3-deoxy-D-manno-octulosonate from 3-deoxy-D-manno-octulosonate and CTP: step 1/1. Its pathway is bacterial outer membrane biogenesis; lipopolysaccharide biosynthesis. In terms of biological role, activates KDO (a required 8-carbon sugar) for incorporation into bacterial lipopolysaccharide in Gram-negative bacteria. The polypeptide is 3-deoxy-manno-octulosonate cytidylyltransferase (Erwinia tasmaniensis (strain DSM 17950 / CFBP 7177 / CIP 109463 / NCPPB 4357 / Et1/99)).